We begin with the raw amino-acid sequence, 376 residues long: Heme chaperone HemW (376 aa).

One can recognise a Radical SAM core domain in the interval 1-233 (MFTLPPISLY…DKLLKKAGYK (233 aa)). Tyr10 is a binding site for S-adenosyl-L-methionine. Residues Cys16, Cys20, and Cys23 each contribute to the [4Fe-4S] cluster site. S-adenosyl-L-methionine is bound by residues Gly66, 67–68 (GT), Glu99, Gln126, Arg138, and Asp162.

The protein belongs to the anaerobic coproporphyrinogen-III oxidase family. HemW subfamily. Requires [4Fe-4S] cluster as cofactor.

The protein resides in the cytoplasm. In terms of biological role, probably acts as a heme chaperone, transferring heme to an unknown acceptor. Binds one molecule of heme per monomer, possibly covalently. Binds 1 [4Fe-4S] cluster. The cluster is coordinated with 3 cysteines and an exchangeable S-adenosyl-L-methionine. This Buchnera aphidicola subsp. Acyrthosiphon pisum (strain APS) (Acyrthosiphon pisum symbiotic bacterium) protein is Heme chaperone HemW.